Here is a 405-residue protein sequence, read N- to C-terminus: MEGESTLGVLSGFVLGALTFQHLNTDSDTEGLLLGEMKGEAKNSITDSQMDSVKVVYTIDIQKYIPCYRLFSFYNSLGEVNEHALKKILSNVKKTVVGWYKFRRHSDQIMTFREQLLHRNLQTHLSSPELVFLLLTPSITTESCCTHCLEHGLYKPQSGLFHKVPLVVTNLGMSDQLGYKTESVSCTSTVFSRAVRTYSSQFFNEDGSLKEVRKINEMYAAIQEELKTICQKVEQSEREVEKLLMDVNRLKEVRKKQQAQAKGAGEKSQNHPQENILLCQALRTFFPESRVLHSCVISLKNRHISHSGCNTDHHLDVVDKLTLMVEYVYSPEASPAPAAPLSKRKALDTQDQWPAKRPRLLESESRPGPAFRGSHQDKASSSSLDIDTEVGSPEDDTDYPRSPTF.

The MPN domain maps to 7–154 (LGVLSGFVLG…CTHCLEHGLY (148 aa)). A Phosphoserine modification is found at Ser-48. Residues 208–262 (SLKEVRKINEMYAAIQEELKTICQKVEQSEREVEKLLMDVNRLKEVRKKQQAQAK) adopt a coiled-coil conformation. Residues 333 to 405 (ASPAPAAPLS…DTDYPRSPTF (73 aa)) are disordered. Residues Ser-382, Ser-383, Ser-392, and Ser-402 each carry the phosphoserine modification. Residues 386-397 (IDTEVGSPEDDT) are compositionally biased toward acidic residues. Residues 402–405 (SPTF) carry the pSXXF motif motif.

It belongs to the FAM175 family. Abraxas subfamily. In terms of assembly, component of the ARISC complex, at least composed of UIMC1/RAP80, ABRAXAS1, BRCC3/BRCC36, BABAM2 and BABAM1/NBA1. Component of the BRCA1-A complex, at least composed of the BRCA1, BARD1, UIMC1/RAP80, ABRAXAS1, BRCC3/BRCC36, BABAM2 and BABAM1/NBA1. In the complex, interacts directly with UIMC1/RAP80, BRCC3/BRCC36 and BABAM2. Homodimer. Interacts directly (when phosphorylated at Ser-402) with BRCA1. The phosphorylated homodimer can interact directly with two BRCA1 chains, giving rise to a heterotetramer. Binds polyubiquitin. In terms of processing, phosphorylation of Ser-402 of the pSXXF motif by ATM or ATR constitutes a specific recognition motif for the BRCT domain of BRCA1.

It localises to the nucleus. Its function is as follows. Involved in DNA damage response and double-strand break (DSB) repair. Component of the BRCA1-A complex, acting as a central scaffold protein that assembles the various components of the complex and mediates the recruitment of BRCA1. The BRCA1-A complex specifically recognizes 'Lys-63'-linked ubiquitinated histones H2A and H2AX at DNA lesion sites, leading to target the BRCA1-BARD1 heterodimer to sites of DNA damage at DSBs. This complex also possesses deubiquitinase activity that specifically removes 'Lys-63'-linked ubiquitin on histones H2A and H2AX. The chain is BRCA1-A complex subunit Abraxas 1 from Rattus norvegicus (Rat).